Here is a 59-residue protein sequence, read N- to C-terminus: Large ribosomal subunit protein uL30 (59 aa).

Belongs to the universal ribosomal protein uL30 family. As to quaternary structure, part of the 50S ribosomal subunit.

The sequence is that of Large ribosomal subunit protein uL30 from Syntrophotalea carbinolica (strain DSM 2380 / NBRC 103641 / GraBd1) (Pelobacter carbinolicus).